Reading from the N-terminus, the 146-residue chain is 3-dehydroquinate dehydratase (146 aa).

Catalysis depends on Tyr-22, which acts as the Proton acceptor. Residues Asn-73, His-79, and Asp-86 each coordinate substrate. His-99 serves as the catalytic Proton donor. Substrate is bound by residues 100–101 (LS) and Arg-110.

It belongs to the type-II 3-dehydroquinase family. Homododecamer.

The enzyme catalyses 3-dehydroquinate = 3-dehydroshikimate + H2O. The protein operates within metabolic intermediate biosynthesis; chorismate biosynthesis; chorismate from D-erythrose 4-phosphate and phosphoenolpyruvate: step 3/7. Catalyzes a trans-dehydration via an enolate intermediate. This is 3-dehydroquinate dehydratase from Parasynechococcus marenigrum (strain WH8102).